Here is a 135-residue protein sequence, read N- to C-terminus: CDGSH iron-sulfur domain-containing protein 2B (135 aa).

Over 1–37 (MMLESLARVFKVQLPAYLKRLPIPDSIAGFIRLTVLE) the chain is Lumenal. The helical transmembrane segment at 38 to 60 (WLRLLPFLGVLALLGYLAIRPFL) threads the bilayer. Over 61 to 135 (PKKKQQKDSL…GPLILKKKEV (75 aa)) the chain is Cytoplasmic. [2Fe-2S] cluster-binding residues include cysteine 99, cysteine 101, cysteine 110, and histidine 114.

Belongs to the CISD protein family. CISD2 subfamily. As to quaternary structure, homodimer. [2Fe-2S] cluster serves as cofactor.

The protein resides in the endoplasmic reticulum membrane. It is found in the mitochondrion outer membrane. Functionally, regulator of autophagy that contributes to antagonize becn1-mediated cellular autophagy at the endoplasmic reticulum. Participates in the interaction of bcl2 with becn1 and is required for bcl2-mediated depression of endoplasmic reticulum Ca(2+) stores during autophagy. The protein is CDGSH iron-sulfur domain-containing protein 2B (cisd2-b) of Xenopus laevis (African clawed frog).